The primary structure comprises 150 residues: D-aminoacyl-tRNA deacylase (150 aa).

Positions 136-137 match the Gly-cisPro motif, important for rejection of L-amino acids motif; the sequence is GP.

It belongs to the DTD family. In terms of assembly, homodimer.

It localises to the cytoplasm. It catalyses the reaction glycyl-tRNA(Ala) + H2O = tRNA(Ala) + glycine + H(+). It carries out the reaction a D-aminoacyl-tRNA + H2O = a tRNA + a D-alpha-amino acid + H(+). In terms of biological role, an aminoacyl-tRNA editing enzyme that deacylates mischarged D-aminoacyl-tRNAs. Also deacylates mischarged glycyl-tRNA(Ala), protecting cells against glycine mischarging by AlaRS. Acts via tRNA-based rather than protein-based catalysis; rejects L-amino acids rather than detecting D-amino acids in the active site. By recycling D-aminoacyl-tRNA to D-amino acids and free tRNA molecules, this enzyme counteracts the toxicity associated with the formation of D-aminoacyl-tRNA entities in vivo and helps enforce protein L-homochirality. This Staphylococcus carnosus (strain TM300) protein is D-aminoacyl-tRNA deacylase.